A 373-amino-acid chain; its full sequence is D-amino-acid transaminase, chloroplastic (373 aa).

The N-terminal 57 residues, 1–57, are a transit peptide targeting the chloroplast; sequence MAGLSLEFTVNTWNLRSLSQVPCPLRHGFRFPRRLTRRRTILMCSDSSSQSWNVPVL. Residue Arg128 participates in pyridoxal 5'-phosphate binding. The Proton acceptor role is filled by Lys222. Lys222 is modified (N6-(pyridoxal phosphate)lysine). Glu255 contacts pyridoxal 5'-phosphate.

This sequence belongs to the class-IV pyridoxal-phosphate-dependent aminotransferase family. As to quaternary structure, homodimer. The cofactor is pyridoxal 5'-phosphate.

The protein localises to the plastid. Its subcellular location is the chloroplast. The catalysed reaction is D-alanine + 2-oxoglutarate = D-glutamate + pyruvate. The enzyme catalyses 4-amino-4-deoxychorismate = 4-aminobenzoate + pyruvate + H(+). Its pathway is cofactor biosynthesis; tetrahydrofolate biosynthesis; 4-aminobenzoate from chorismate: step 2/2. Inhibited by hydroxylamine or amino-oxyacetic acid. Its function is as follows. Amino acid aminotransferase showing activity for D-Asp and D-Ala as amino donors with 2-oxoglutarate as an amino acceptor. Can also use D-Met, D-Tyr, D-Phe, D-Gln, D-Trp and D-Asn as substrates, but no activity with L-Asp, L-Ala, L-Leu, L-Ile or L-Val. Also catalyzes the reverse reaction where an amino group is transferred from D-Glu to pyruvate or oxaloacetate to produce D-Ala or D-Asp, respectively. Also involved in folate biosynthesis, acting as an aminodeoxychorismate lyase converting 4-amino-4-deoxychorismate (ADC) to p-aminobenzoate (PABA). In Arabidopsis thaliana (Mouse-ear cress), this protein is D-amino-acid transaminase, chloroplastic.